The primary structure comprises 346 residues: Phosphoribosylformylglycinamidine cyclo-ligase (346 aa).

The protein belongs to the AIR synthase family.

The protein localises to the cytoplasm. The catalysed reaction is 2-formamido-N(1)-(5-O-phospho-beta-D-ribosyl)acetamidine + ATP = 5-amino-1-(5-phospho-beta-D-ribosyl)imidazole + ADP + phosphate + H(+). It functions in the pathway purine metabolism; IMP biosynthesis via de novo pathway; 5-amino-1-(5-phospho-D-ribosyl)imidazole from N(2)-formyl-N(1)-(5-phospho-D-ribosyl)glycinamide: step 2/2. The protein is Phosphoribosylformylglycinamidine cyclo-ligase of Bacillus anthracis (strain A0248).